The primary structure comprises 692 residues: Catalase-B (692 aa).

Active-site residues include His69 and Asn142. A heme-binding site is contributed by Tyr356.

It belongs to the catalase family. The cofactor is heme.

It is found in the cytoplasm. It catalyses the reaction 2 H2O2 = O2 + 2 H2O. Occurs in almost all aerobically respiring organisms and serves to protect cells from the toxic effects of hydrogen peroxide. Its accumulation in prespore cells affords the spores protection from oxidation during prolonged dormancy. Required for normal developmental timing, possibly through a regulatory role in differentiation and morphogenesis. This Dictyostelium discoideum (Social amoeba) protein is Catalase-B (catB).